The following is a 273-amino-acid chain: NAD(P)H-hydrate epimerase (273 aa).

A YjeF N-terminal domain is found at 52–260 (AQQIDQELFN…GIIQKYELNL (209 aa)). 105–109 (NNGGD) contacts (6S)-NADPHX. K(+) contacts are provided by Asn106 and Asp170. (6S)-NADPHX is bound by residues 174–180 (GFSFKGE) and Asp203. Ser206 is a binding site for K(+).

It belongs to the NnrE/AIBP family. K(+) serves as cofactor.

It catalyses the reaction (6R)-NADHX = (6S)-NADHX. The catalysed reaction is (6R)-NADPHX = (6S)-NADPHX. Functionally, catalyzes the epimerization of the S- and R-forms of NAD(P)HX, a damaged form of NAD(P)H that is a result of enzymatic or heat-dependent hydration. This is a prerequisite for the S-specific NAD(P)H-hydrate dehydratase to allow the repair of both epimers of NAD(P)HX. This is NAD(P)H-hydrate epimerase from Branchiostoma floridae (Florida lancelet).